We begin with the raw amino-acid sequence, 380 residues long: Tetratricopeptide repeat protein 19, mitochondrial (380 aa).

A mitochondrion-targeting transit peptide spans Met-1–Ala-70. TPR repeat units follow at residues Thr-136–Gly-169, Ile-179–Lys-212, Gly-237–Ile-270, Ile-279–Ile-312, and His-318–Lys-351.

The protein belongs to the TTC19 family. Binds to the mature mitochondrial complex III dimer, after the incorporation of the Rieske protein UQCRFS1. Interacts with UQCRC1 and UQCRFS1. Interacts with ZFYVE26 and CHMP4B. Post-translationally, proteolytically cleaved by PARL.

It localises to the mitochondrion inner membrane. Functionally, required for the preservation of the structural and functional integrity of mitochondrial respiratory complex III by allowing the physiological turnover of the Rieske protein UQCRFS1. Involved in the clearance of UQCRFS1 N-terminal fragments, which are produced upon incorporation of UQCRFS1 into the complex III and whose presence is detrimental for its catalytic activity. In Homo sapiens (Human), this protein is Tetratricopeptide repeat protein 19, mitochondrial (TTC19).